A 469-amino-acid polypeptide reads, in one-letter code: MKMPKTIGLVHFIGIGGIGMSGIAEVLHNLGHRVQGSDQSDSANVQRLREKGIKISVGHKAENLGDAEVVVVSTAIKKDNPELIAAREKFLPVVRRAEMLAELMRFRNAIAIGGTHGKTTTTSMVAALLDAGGLDPTVINGGIINAYGTNARMGAGEWMVVEADESDGTFLKLPADIAVVTNIDPEHLDHYGNFDAVRAAFRQFVENVPFYGFGVLCLDHPEVQSMVGKIEDRKVITYGENPQADVRYHNVRMDGATSVFDVEIRRRRTGQVIQLNGLRLPMPGRHNVSNATAAVAVAQRLGMEPEAIAKGLASFGGVKRRFTLTGEWNGASIFDDYGHHPVEIKAVLRAAREACQGRIVAVHQPHRYSRLSSLFEDFSACFNDADTILIAPVYAAGEDAIDGVNSQALVNSIKAAGHRDAQFLTGPEALAPVVSKIAQPGDFVVLLGAGSITYWAAALPKELAEISGS.

Glycine 114–threonine 120 serves as a coordination point for ATP.

It belongs to the MurCDEF family.

It localises to the cytoplasm. The enzyme catalyses UDP-N-acetyl-alpha-D-muramate + L-alanine + ATP = UDP-N-acetyl-alpha-D-muramoyl-L-alanine + ADP + phosphate + H(+). It participates in cell wall biogenesis; peptidoglycan biosynthesis. Functionally, cell wall formation. The polypeptide is UDP-N-acetylmuramate--L-alanine ligase (Sinorhizobium fredii (strain NBRC 101917 / NGR234)).